The sequence spans 331 residues: Glycerol-3-phosphate dehydrogenase [NAD(P)+] (331 aa).

3 residues coordinate NADPH: serine 10, tryptophan 11, and lysine 101. Residues lysine 101, glycine 132, and serine 134 each coordinate sn-glycerol 3-phosphate. Alanine 136 contributes to the NADPH binding site. Residues lysine 188, aspartate 241, serine 251, arginine 252, and asparagine 253 each coordinate sn-glycerol 3-phosphate. Lysine 188 functions as the Proton acceptor in the catalytic mechanism. Arginine 252 serves as a coordination point for NADPH. Residues valine 276 and glutamate 278 each coordinate NADPH.

The protein belongs to the NAD-dependent glycerol-3-phosphate dehydrogenase family.

The protein localises to the cytoplasm. The enzyme catalyses sn-glycerol 3-phosphate + NAD(+) = dihydroxyacetone phosphate + NADH + H(+). It carries out the reaction sn-glycerol 3-phosphate + NADP(+) = dihydroxyacetone phosphate + NADPH + H(+). It functions in the pathway membrane lipid metabolism; glycerophospholipid metabolism. In terms of biological role, catalyzes the reduction of the glycolytic intermediate dihydroxyacetone phosphate (DHAP) to sn-glycerol 3-phosphate (G3P), the key precursor for phospholipid synthesis. In Acholeplasma laidlawii (strain PG-8A), this protein is Glycerol-3-phosphate dehydrogenase [NAD(P)+].